A 257-amino-acid chain; its full sequence is Imidazole glycerol phosphate synthase subunit HisF (257 aa).

Active-site residues include D11 and D130.

It belongs to the HisA/HisF family. In terms of assembly, heterodimer of HisH and HisF.

The protein resides in the cytoplasm. It catalyses the reaction 5-[(5-phospho-1-deoxy-D-ribulos-1-ylimino)methylamino]-1-(5-phospho-beta-D-ribosyl)imidazole-4-carboxamide + L-glutamine = D-erythro-1-(imidazol-4-yl)glycerol 3-phosphate + 5-amino-1-(5-phospho-beta-D-ribosyl)imidazole-4-carboxamide + L-glutamate + H(+). It participates in amino-acid biosynthesis; L-histidine biosynthesis; L-histidine from 5-phospho-alpha-D-ribose 1-diphosphate: step 5/9. Its function is as follows. IGPS catalyzes the conversion of PRFAR and glutamine to IGP, AICAR and glutamate. The HisF subunit catalyzes the cyclization activity that produces IGP and AICAR from PRFAR using the ammonia provided by the HisH subunit. The protein is Imidazole glycerol phosphate synthase subunit HisF of Shewanella loihica (strain ATCC BAA-1088 / PV-4).